The chain runs to 439 residues: Forkhead box protein J1-A (439 aa).

A DNA-binding region (fork-head) is located at residues 124–218 (KPPYSYATLI…INGAMKKRRL (95 aa)). The segment at 273–293 (EHGWNSISDGKSHKRKQPLPK) is disordered. The span at 284-293 (SHKRKQPLPK) shows a compositional bias: basic residues.

The protein belongs to the FOXJ1 family. Expressed in two independent areas of stage 10-11 embryos; in the dorsal blastopore lip (Spemann organizer) and shortly after in the ectodermal cells of the animal cap. As development proceeds, cells of the animal cap contribute to the epidermis and show a spotty pattern, which suggests expression in ciliated epidermal cells. Distribution of these cells is uniform in the trunk area of the embryo but more random in the head, being practically absent in the cement gland and olfactory placode. The spotted pattern becomes more dispersed as embryos grow in size. Due to cell movements during gastrulation, expression in the dorsal lip becomes located in the dorsal midline with expression restricted to the neuroectoderm. Expressed transiently in cells of the newly formed neural floor plate in the tail of older tadpoles.

The protein localises to the nucleus. Functionally, key transcription factor required for motile ciliogenesis. Activates genes essential for motile cilia formation and function. Required for ciliogenesis in multiciliated cells. The chain is Forkhead box protein J1-A (foxj1-a) from Xenopus laevis (African clawed frog).